A 764-amino-acid chain; its full sequence is Phosphoribosylformylglycinamidine synthase subunit PurL (764 aa).

The disordered stretch occupies residues 1 to 23 (MTQEVDTVERAAATPDHPQPYRE). Residue His-57 is part of the active site. ATP-binding residues include Tyr-60 and Lys-104. Glu-106 lines the Mg(2+) pocket. Residues 107–110 (SHNH) and Arg-129 each bind substrate. The Proton acceptor role is filled by His-108. Residue Asp-130 participates in Mg(2+) binding. Gln-258 lines the substrate pocket. Position 286 (Asp-286) interacts with Mg(2+). Substrate is bound at residue 330–332 (ESQ). ATP-binding residues include Asn-518 and Gly-555. Asn-556 is a binding site for Mg(2+). Ser-558 is a substrate binding site.

The protein belongs to the FGAMS family. In terms of assembly, monomer. Part of the FGAM synthase complex composed of 1 PurL, 1 PurQ and 2 PurS subunits.

Its subcellular location is the cytoplasm. The enzyme catalyses N(2)-formyl-N(1)-(5-phospho-beta-D-ribosyl)glycinamide + L-glutamine + ATP + H2O = 2-formamido-N(1)-(5-O-phospho-beta-D-ribosyl)acetamidine + L-glutamate + ADP + phosphate + H(+). Its pathway is purine metabolism; IMP biosynthesis via de novo pathway; 5-amino-1-(5-phospho-D-ribosyl)imidazole from N(2)-formyl-N(1)-(5-phospho-D-ribosyl)glycinamide: step 1/2. Its function is as follows. Part of the phosphoribosylformylglycinamidine synthase complex involved in the purines biosynthetic pathway. Catalyzes the ATP-dependent conversion of formylglycinamide ribonucleotide (FGAR) and glutamine to yield formylglycinamidine ribonucleotide (FGAM) and glutamate. The FGAM synthase complex is composed of three subunits. PurQ produces an ammonia molecule by converting glutamine to glutamate. PurL transfers the ammonia molecule to FGAR to form FGAM in an ATP-dependent manner. PurS interacts with PurQ and PurL and is thought to assist in the transfer of the ammonia molecule from PurQ to PurL. This Mycolicibacterium vanbaalenii (strain DSM 7251 / JCM 13017 / BCRC 16820 / KCTC 9966 / NRRL B-24157 / PYR-1) (Mycobacterium vanbaalenii) protein is Phosphoribosylformylglycinamidine synthase subunit PurL.